A 575-amino-acid polypeptide reads, in one-letter code: MPLSDNLNLLWSSLIVAELVKNGLDTFFISPGNRNAPLISALIHEERSVKKICVDERAAGYRALGHAKAAGRPGVLVCTSGTAPANYYPAVIEAFRDEIPLVILSADRPPELIGSDANQTIVQPDLYGRYCRDSLLIPCPSADYPLEALLARIDSLIARPVGPVHINCAFRDPLVPGIPDSRPIPDELLATAGRLYAREGAYTTYPSPGTLHTGLEDVEAILNRTARGLIVIGRLDGPRDAPALEELAKKLGWPVFCDIASSMKGRIPSDRQIFSLDHPEALRLVSAYAPETILQFGSGLVSKHYFASLLPHSEATVIQISPRAGLRDPAHRVNVRLSMPAFAFVEGLHLQENPSLDATACCLFLDSLETLYQALQRRIPEETLSFSRIASDLLGAVPDGEGLFLGNSLVIRAFDKFRSPFPRKISVISNRGVSGIEGNIATSVGFAEASRRRVTAVIGDISFLHDLNSLLLLAQSATPVVLIIINNGGGRIFERLPIRDFPEILEPYMTTPHGMTFDLLAAQFDLPYFRAATPDELRKAYESALDAERSAVLEVTLDPEEDLRTFQTFQNVRLP.

It belongs to the TPP enzyme family. MenD subfamily. As to quaternary structure, homodimer. The cofactor is Mg(2+). Requires Mn(2+) as cofactor. Thiamine diphosphate is required as a cofactor.

It carries out the reaction isochorismate + 2-oxoglutarate + H(+) = 5-enolpyruvoyl-6-hydroxy-2-succinyl-cyclohex-3-ene-1-carboxylate + CO2. It participates in quinol/quinone metabolism; 1,4-dihydroxy-2-naphthoate biosynthesis; 1,4-dihydroxy-2-naphthoate from chorismate: step 2/7. The protein operates within quinol/quinone metabolism; menaquinone biosynthesis. In terms of biological role, catalyzes the thiamine diphosphate-dependent decarboxylation of 2-oxoglutarate and the subsequent addition of the resulting succinic semialdehyde-thiamine pyrophosphate anion to isochorismate to yield 2-succinyl-5-enolpyruvyl-6-hydroxy-3-cyclohexene-1-carboxylate (SEPHCHC). This Syntrophus aciditrophicus (strain SB) protein is 2-succinyl-5-enolpyruvyl-6-hydroxy-3-cyclohexene-1-carboxylate synthase.